The sequence spans 301 residues: NAD kinase (301 aa).

Asp84 (proton acceptor) is an active-site residue. NAD(+) contacts are provided by residues 84–85 (DG), Arg89, 158–159 (NE), Lys169, Asn188, 199–204 (TAYSFS), and Gln258.

This sequence belongs to the NAD kinase family. It depends on a divalent metal cation as a cofactor.

It localises to the cytoplasm. It catalyses the reaction NAD(+) + ATP = ADP + NADP(+) + H(+). Its function is as follows. Involved in the regulation of the intracellular balance of NAD and NADP, and is a key enzyme in the biosynthesis of NADP. Catalyzes specifically the phosphorylation on 2'-hydroxyl of the adenosine moiety of NAD to yield NADP. This Tropheryma whipplei (strain Twist) (Whipple's bacillus) protein is NAD kinase.